We begin with the raw amino-acid sequence, 211 residues long: Protein Nef (211 aa).

G2 carries N-myristoyl glycine; by host lipidation. S6 carries the phosphoserine; by host modification. The segment at 67–70 is acidic; interacts with host PACS1 and PACS2; stabilizes the interaction of NEF/MHC-I with host AP1M1; necessary for MHC-I internalization; the sequence is EDEE. The segment at 74–83 is SH3-binding; interaction with Src family tyrosine kinases; it reads PVRPQVPLRP. A PxxP; stabilizes the interaction of NEF/MHC-I with host AP1M1; necessary for MHC-I internalization motif is present at residues 77–80; sequence PQVP. The mediates dimerization, Nef-PTE1 interaction stretch occupies residues 113–129; it reads DILDLWVYHTQGYFPDW. The interval 153-185 is binding to ATP6V1H; sequence MDPDQVEEANEGENNSLLHPISLHGMDDPEKEV. The Dileucine internalization motif; necessary for CD4 internalization signature appears at 169-170; the sequence is LL. The Diacidic; necessary for CD4 internalization signature appears at 179–180; the sequence is DD.

It belongs to the lentivirus primate group Nef protein family. In terms of assembly, monomer; cytosolic form. Homodimer; membrane bound form. Interacts with Nef associated p21-activated kinase (PAK2); this interaction activates PAK2. Associates with the Nef-MHC-I-AP1 complex; this complex is required for MHC-I internalization. Interacts (via C-terminus) with host PI3-kinase. Interacts with host PACS1; this interaction seems to be weak. Interacts with host PACS2. Interacts with host LCK and MAPK3; these interactions inhibit the kinase activity of the latter. Interacts with host ATP6V1H; this interaction may play a role in CD4 endocytosis. Associates with the CD4-Nef-AP2 complex; this complex is required for CD4 internalization. Interacts with host AP2 subunit alpha and AP2 subunit sigma2. Interacts with TCR-zeta chain; this interaction up-regulates the Fas ligand (FasL) surface expression. Interacts with host HCK, LYN, and SRC; these interactions activate the Src family kinases. Interacts with MAP3K5; this interaction inhibits the Fas and TNFR-mediated death signals. Interacts with beta-COP and PTE1. Interacts with human RACK1; this increases Nef phosphorylation by PKC. Interacts with TP53; this interaction decreases the half-life of TP53, protecting the infected cell against p53-mediated apoptosis. In terms of processing, the virion-associated Nef proteins are cleaved by the viral protease to release the soluble C-terminal core protein. Nef is probably cleaved concomitantly with viral structural proteins on maturation of virus particles. Myristoylated. Post-translationally, phosphorylated on serine residues, probably by host PKCdelta and theta.

Its subcellular location is the host cell membrane. The protein localises to the virion. It localises to the secreted. It is found in the host Golgi apparatus membrane. Functionally, factor of infectivity and pathogenicity, required for optimal virus replication. Alters numerous pathways of T-lymphocyte function and down-regulates immunity surface molecules in order to evade host defense and increase viral infectivity. Alters the functionality of other immunity cells, like dendritic cells, monocytes/macrophages and NK cells. Its function is as follows. In infected CD4(+) T-lymphocytes, down-regulates the surface MHC-I, mature MHC-II, CD4, CD28, CCR5 and CXCR4 molecules. Mediates internalization and degradation of host CD4 through the interaction of with the cytoplasmic tail of CD4, the recruitment of AP-2 (clathrin adapter protein complex 2), internalization through clathrin coated pits, and subsequent transport to endosomes and lysosomes for degradation. Diverts host MHC-I molecules to the trans-Golgi network-associated endosomal compartments by an endocytic pathway to finally target them for degradation. MHC-I down-regulation may involve AP-1 (clathrin adapter protein complex 1) or possibly Src family kinase-ZAP70/Syk-PI3K cascade recruited by PACS2. In consequence infected cells are masked for immune recognition by cytotoxic T-lymphocytes. Decreasing the number of immune receptors also prevents reinfection by more HIV particles (superinfection). Down-regulates host SERINC3 and SERINC5 thereby excluding these proteins from the viral particles. Virion infectivity is drastically higher when SERINC3 or SERINC5 are excluded from the viral envelope, because these host antiviral proteins impair the membrane fusion event necessary for subsequent virion penetration. In terms of biological role, bypasses host T-cell signaling by inducing a transcriptional program nearly identical to that of anti-CD3 cell activation. Interaction with TCR-zeta chain up-regulates the Fas ligand (FasL). Increasing surface FasL molecules and decreasing surface MHC-I molecules on infected CD4(+) cells send attacking cytotoxic CD8+ T-lymphocytes into apoptosis. Plays a role in optimizing the host cell environment for viral replication without causing cell death by apoptosis. Protects the infected cells from apoptosis in order to keep them alive until the next virus generation is ready to strike. Inhibits the Fas and TNFR-mediated death signals by blocking MAP3K5/ASK1. Decreases the half-life of TP53, protecting the infected cell against p53-mediated apoptosis. Inhibits the apoptotic signals regulated by the Bcl-2 family proteins through the formation of a Nef/PI3-kinase/PAK2 complex that leads to activation of PAK2 and induces phosphorylation of host BAD. Functionally, extracellular Nef protein targets CD4(+) T-lymphocytes for apoptosis by interacting with CXCR4 surface receptors. The sequence is that of Protein Nef from Homo sapiens (Human).